Consider the following 98-residue polypeptide: Prostate and testis expressed protein 3 (98 aa).

The N-terminal stretch at M1–S20 is a signal peptide. Residues L21–K97 enclose the UPAR/Ly6 domain. 4 disulfide bridges follow: C23-C50, C26-C35, C42-C68, and C72-C88.

Belongs to the PATE family. In terms of tissue distribution, specifically expressed in prostate and testis.

The protein localises to the secreted. In Homo sapiens (Human), this protein is Prostate and testis expressed protein 3 (PATE3).